Here is a 189-residue protein sequence, read N- to C-terminus: Peptidyl-tRNA hydrolase (189 aa).

Position 14 (Y14) interacts with tRNA. H19 (proton acceptor) is an active-site residue. Positions 64, 66, and 112 each coordinate tRNA.

The protein belongs to the PTH family. Monomer.

It is found in the cytoplasm. The enzyme catalyses an N-acyl-L-alpha-aminoacyl-tRNA + H2O = an N-acyl-L-amino acid + a tRNA + H(+). Its function is as follows. Hydrolyzes ribosome-free peptidyl-tRNAs (with 1 or more amino acids incorporated), which drop off the ribosome during protein synthesis, or as a result of ribosome stalling. Functionally, catalyzes the release of premature peptidyl moieties from peptidyl-tRNA molecules trapped in stalled 50S ribosomal subunits, and thus maintains levels of free tRNAs and 50S ribosomes. The sequence is that of Peptidyl-tRNA hydrolase from Rhizorhabdus wittichii (strain DSM 6014 / CCUG 31198 / JCM 15750 / NBRC 105917 / EY 4224 / RW1) (Sphingomonas wittichii).